The sequence spans 224 residues: UPF0758 protein Pmen_4376 (224 aa).

The 123-residue stretch at 102 to 224 (ALESPQAVRD…PLSMAELGWM (123 aa)) folds into the MPN domain. Positions 173, 175, and 186 each coordinate Zn(2+). Residues 173 to 186 (HNHPSGVCEPSQAD) carry the JAMM motif motif.

This sequence belongs to the UPF0758 family.

The sequence is that of UPF0758 protein Pmen_4376 from Ectopseudomonas mendocina (strain ymp) (Pseudomonas mendocina).